A 2863-amino-acid chain; its full sequence is Lipopolysaccharide-responsive and beige-like anchor protein (2863 aa).

3 disordered regions span residues 1–35, 969–1005, and 1018–1039; these read MASEDNRVPSPPPTGDDGGGGGREETPTEGGALSL, VGSQQPDTKDSPVCPHFTTNGNENSSIEKTSSLESAS, and EMKAEQENQELPDEGTLEETLT. Ala2 bears the N-acetylalanine mark. A phosphoserine mark is found at Ser10, Ser979, and Ser1003. Residues 985–1005 show a composition bias toward polar residues; the sequence is FTTNGNENSSIEKTSSLESAS. Positions 1006-1053 form a coiled coil; that stretch reads NIELQTTNTSYEEMKAEQENQELPDEGTLEETLTNETRNADDLEVSSD. Over residues 1024–1034 the composition is skewed to acidic residues; the sequence is ENQELPDEGTL. 3 positions are modified to phosphoserine: Ser1100, Ser1135, and Ser1139. The segment covering 1161 to 1176 has biased composition (basic and acidic residues); that stretch reads PVTEKQTDTETQDSKD. Residues 1161–1193 are disordered; it reads PVTEKQTDTETQDSKDSGIQTMTASGSSAMSPE. Over residues 1177–1193 the composition is skewed to polar residues; sequence SGIQTMTASGSSAMSPE. Residues Ser1233, Ser1247, and Ser1261 each carry the phosphoserine modification. One copy of the WD 1 repeat lies at 1301–1343; the sequence is STVFRIPEFNWSQMHQRLLTDLLFSIETDIQMWRSHSTKTVMD. A phosphoserine mark is found at Ser1488 and Ser1498. A helical membrane pass occupies residues 1531 to 1548; it reads FLALAVVYFISVLMVSKY. Residues 1586–1599 are compositionally biased toward low complexity; it reads LTTASVEESESTSS. Disordered stretches follow at residues 1586 to 1668 and 1759 to 1789; these read LTTA…KATP and QASDMGGESPGSRSSNAKLPSVPTVDSVSQD. At Ser1605 the chain carries Phosphoserine. The segment covering 1650–1664 has biased composition (basic and acidic residues); that stretch reads KSPETKNDRGNDLDT. Phosphoserine is present on residues Ser1767, Ser1770, and Ser2064. Residues 1769-1789 are compositionally biased toward polar residues; the sequence is GSRSSNAKLPSVPTVDSVSQD. The 109-residue stretch at 2073–2181 folds into the BEACH-type PH domain; it reads NLAGPVSLST…TVKKVVNYLP (109 aa). The region spanning 2200–2489 is the BEACH domain; that stretch reads ASPRQLFKAS…QLLIEPHPPR (290 aa). Position 2496 is a phosphoserine (Ser2496). WD repeat units lie at residues 2591–2633, 2636–2679, 2695–2735, 2777–2816, and 2819–2858; these read DQSI…LIQV, GHWD…SGIG, GHDY…RTLE, ETDDNIRAIQLSRDGQYLLTGGDRGVVVVRQVSDLKQLFA, and GCDAGIRAMALSYDQRCIISGMASGSIVLFYNDFNRWHHE.

As to quaternary structure, interacts with TOM1 and TOLLIP. In terms of tissue distribution, ubiquitous.

The protein resides in the cell membrane. Its subcellular location is the endoplasmic reticulum membrane. The protein localises to the golgi apparatus. It localises to the trans-Golgi network membrane. It is found in the lysosome membrane. Involved in coupling signal transduction and vesicle trafficking to enable polarized secretion and/or membrane deposition of immune effector molecules. Involved in phagophore growth during mitophagy by regulating ATG9A trafficking to mitochondria. The sequence is that of Lipopolysaccharide-responsive and beige-like anchor protein from Homo sapiens (Human).